A 514-amino-acid chain; its full sequence is Cilia- and flagella-associated protein 53 (514 aa).

Coiled coils occupy residues 91-176 (VINT…EKKV) and 205-478 (WEED…AGLA). Disordered stretches follow at residues 261-296 (QNKAQIKREDEQEKLQKQKRRQETRSSLKKAVQDKI) and 495-514 (QALSQNVHPMRRGYPDKPPL).

It belongs to the CFAP53 family. As to quaternary structure, microtubule inner protein component of sperm flagellar doublet microtubules. Interacts with PIERCE1 and PIERCE2; the interactions link outer dynein arms docking complex (ODA-DC) to the internal microtubule inner proteins (MIP) in cilium axoneme. Interacts with CCDC38. Interacts with CCDC42 and IFT88. Interacts with centriolar satellite proteins PIBF1/CEP90 and PCM1. Interacts with dyneins DNAIC1, DNAIC2 AND DNAH11 and with ODA-DC component ODAD4/TTC25. As to expression, expressed predominantly in testis (at protein level). In embryos at 8 dpc, specifically expressed in the node, in particular within the pit cells that are located at the center of the node and have rotating monocilia on their apical surface. In the adult, expressed in epithelial cells of the trachea, brain ventricles, oviduct and testis.

Its subcellular location is the cytoplasm. It is found in the cytoskeleton. The protein localises to the cilium axoneme. The protein resides in the flagellum axoneme. It localises to the microtubule organizing center. Its subcellular location is the centrosome. It is found in the centriolar satellite. The protein localises to the spindle pole. Microtubule inner protein (MIP) part of the dynein-decorated doublet microtubules (DMTs) in cilia axoneme, which is required for motile cilia beating. Regulates motility patterns of both 9+0 and 9+2 motile cilia through differential localization and recruitment of axonemal dynein components. Required for centriolar satellite integrity and non-motile cilium assembly. Required for motile cilium formation. Through its role in the beating of primary cilia, involved in the establishment of organ laterality during embryogenesis. Required for sperm flagellum biogenesis and is essential for male fertility. The sequence is that of Cilia- and flagella-associated protein 53 from Mus musculus (Mouse).